Consider the following 145-residue polypeptide: Putative antiporter subunit mnhG2 (145 aa).

The next 3 helical transmembrane spans lie at 11–31 (IAAV…IGIV), 51–71 (VLLT…FFSV), and 72–92 (RLLL…HLVA).

The protein belongs to the CPA3 antiporters (TC 2.A.63) subunit G family. As to quaternary structure, may form a heterooligomeric complex that consists of seven subunits: mnhA2, mnhB2, mnhC2, mnhD2, mnhE2, mnhF2 and mnhG2.

It is found in the cell membrane. The sequence is that of Putative antiporter subunit mnhG2 (mnhG2) from Staphylococcus aureus (strain bovine RF122 / ET3-1).